Here is a 554-residue protein sequence, read N- to C-terminus: Phosphomannomutase (554 aa).

Residue Ser-149 is the Phosphoserine intermediate of the active site. Mg(2+) is bound by residues Ser-149, Asp-301, Asp-303, and Asp-305.

Belongs to the phosphohexose mutase family. Requires Mg(2+) as cofactor.

The enzyme catalyses alpha-D-mannose 1-phosphate = D-mannose 6-phosphate. In Mycoplasma pneumoniae (strain ATCC 29342 / M129 / Subtype 1) (Mycoplasmoides pneumoniae), this protein is Phosphomannomutase (manB).